We begin with the raw amino-acid sequence, 509 residues long: DNA nucleotidylexotransferase (509 aa).

The interval 1 to 24 (MDPPRASHLSPRKKRPRQTGALMA) is disordered. The Nuclear localization signal signature appears at 11–17 (PRKKRPR). The 98-residue stretch at 27–124 (PQDIKFQDLV…KPVEMTGKHQ (98 aa)) folds into the BRCT domain. Residue Ser134 is modified to Phosphoserine. A mediates interaction with DNTTIP2 region spans residues 151–509 (SQYACQRRTT…DYIEPWERNA (359 aa)). Positions 258 to 262 (VGLKT) are involved in DNA binding. Residues 333 to 338 (GFRRGK) and 342 to 345 (HDVD) each bind a 2'-deoxyribonucleoside 5'-triphosphate. Mg(2+)-binding residues include Asp343, Asp345, and Asp433. 448 to 449 (GW) is a binding site for a 2'-deoxyribonucleoside 5'-triphosphate.

The protein belongs to the DNA polymerase type-X family. In terms of assembly, interacts with PRP19 and DNTTIP1. Forms a ternary complex with DNTTIP2 and core histone. Released from this complex by PCNA. Interacts with TRERF1. The cofactor is Mg(2+).

It is found in the nucleus. The catalysed reaction is DNA(n) + a 2'-deoxyribonucleoside 5'-triphosphate = DNA(n+1) + diphosphate. Functionally, template-independent DNA polymerase which catalyzes the random addition of deoxynucleoside 5'-triphosphate to the 3'-end of a DNA initiator. One of the in vivo functions of this enzyme is the addition of nucleotides at the junction (N region) of rearranged Ig heavy chain and T-cell receptor gene segments during the maturation of B- and T-cells. This Homo sapiens (Human) protein is DNA nucleotidylexotransferase (DNTT).